Here is a 752-residue protein sequence, read N- to C-terminus: Cation-transporting P-type ATPase B (752 aa).

The HMA domain maps to 15–78 (RRIRLDVLGM…VVEKAGYHAA (64 aa)). 2 residues coordinate a metal cation: Cys-26 and Cys-29. 6 consecutive transmembrane segments (helical) span residues 105-125 (LLVA…FAIV), 132-152 (GWGY…AWPF), 167-187 (METL…SSVF), 201-221 (AILN…VFVL), 361-381 (IAGV…AAWL), and 390-410 (AFSV…GLAT). Asp-446 acts as the 4-aspartylphosphate intermediate in catalysis. 2 consecutive transmembrane segments (helical) span residues 491 to 511 (MAAA…FVAV) and 714 to 734 (AIPI…AMAF).

The protein belongs to the cation transport ATPase (P-type) (TC 3.A.3) family. Type IB subfamily.

The protein localises to the cell membrane. It catalyses the reaction ATP + H2O = ADP + phosphate + H(+). This is Cation-transporting P-type ATPase B (ctpB) from Mycobacterium tuberculosis (strain ATCC 25618 / H37Rv).